Here is a 216-residue protein sequence, read N- to C-terminus: Thymidylate kinase (216 aa).

Position 10-17 (10-17) interacts with ATP; sequence GIDGCGKT.

It belongs to the thymidylate kinase family.

It carries out the reaction dTMP + ATP = dTDP + ADP. In terms of biological role, phosphorylation of dTMP to form dTDP in both de novo and salvage pathways of dTTP synthesis. This is Thymidylate kinase from Prochlorococcus marinus (strain MIT 9313).